Here is a 90-residue protein sequence, read N- to C-terminus: Large ribosomal subunit protein bL27 (90 aa).

Residues methionine 1–arginine 20 are disordered.

It belongs to the bacterial ribosomal protein bL27 family.

This Nitrobacter hamburgensis (strain DSM 10229 / NCIMB 13809 / X14) protein is Large ribosomal subunit protein bL27.